Reading from the N-terminus, the 217-residue chain is Coiled-coil domain-containing protein 124-A (217 aa).

A disordered region spans residues Met1–Val128. Basic and acidic residues-rich tracts occupy residues Arg18–His45, Arg52–Leu74, and Thr95–Val128. The stretch at Val46–Lys82 forms a coiled coil.

It belongs to the CCDC124 family. In terms of assembly, associates with translationally inactive ribosomes in the nonrotated state.

It is found in the cytoplasm. It localises to the cytoskeleton. The protein resides in the microtubule organizing center. The protein localises to the centrosome. Its subcellular location is the midbody. Its function is as follows. Ribosome-binding protein involved in ribosome hibernation: associates with translationally inactive ribosomes and stabilizes the nonrotated conformation of the 80S ribosome, thereby promoting ribosome preservation and storage. In Xenopus laevis (African clawed frog), this protein is Coiled-coil domain-containing protein 124-A (ccdc124-a).